Consider the following 353-residue polypeptide: Alanine racemase (353 aa).

The active-site Proton acceptor; specific for D-alanine is the lysine 33. An N6-(pyridoxal phosphate)lysine modification is found at lysine 33. Arginine 129 is a binding site for substrate. Catalysis depends on tyrosine 250, which acts as the Proton acceptor; specific for L-alanine. Residue methionine 298 coordinates substrate.

This sequence belongs to the alanine racemase family. Requires pyridoxal 5'-phosphate as cofactor.

The catalysed reaction is L-alanine = D-alanine. Its pathway is amino-acid biosynthesis; D-alanine biosynthesis; D-alanine from L-alanine: step 1/1. Catalyzes the interconversion of L-alanine and D-alanine. May also act on other amino acids. This chain is Alanine racemase (alr), found in Aromatoleum aromaticum (strain DSM 19018 / LMG 30748 / EbN1) (Azoarcus sp. (strain EbN1)).